Here is a 434-residue protein sequence, read N- to C-terminus: Alpha-enolase (434 aa).

Residue serine 2 is modified to N-acetylserine. N6-acetyllysine is present on lysine 5. Mg(2+) is bound at residue serine 40. At tyrosine 44 the chain carries Phosphotyrosine. Lysine 60 is subject to N6-acetyllysine; alternate. Lysine 60 is modified (N6-succinyllysine; alternate). Lysine 64 and lysine 71 each carry N6-acetyllysine. The residue at position 89 (lysine 89) is an N6-acetyllysine; alternate. Lysine 89 is subject to N6-succinyllysine; alternate. An N6-acetyllysine mark is found at lysine 92 and lysine 126. Substrate-binding residues include histidine 158 and glutamate 167. 2 positions are modified to N6-acetyllysine: lysine 193 and lysine 199. At lysine 202 the chain carries N6-acetyllysine; alternate. Lysine 202 is covalently cross-linked (Glycyl lysine isopeptide (Lys-Gly) (interchain with G-Cter in SUMO2); alternate). Catalysis depends on glutamate 210, which acts as the Proton donor. An N6-acetyllysine; alternate mark is found at lysine 228 and lysine 233. The residue at position 228 (lysine 228) is an N6-succinyllysine; alternate. Residue lysine 228 is modified to N6-(2-hydroxyisobutyryl)lysine; alternate. Lysine 233 is subject to N6-malonyllysine; alternate. Aspartate 245 is a Mg(2+) binding site. Serine 254 carries the post-translational modification Phosphoserine. Residue lysine 256 is modified to N6-acetyllysine. Phosphoserine is present on serine 263. Lysine 281 is modified (N6-acetyllysine; alternate). The residue at position 281 (lysine 281) is an N6-(2-hydroxyisobutyryl)lysine; alternate. Tyrosine 287 is subject to Phosphotyrosine. Serine 291 is subject to Phosphoserine. The Mg(2+) site is built by glutamate 293 and aspartate 318. Positions 293 and 318 each coordinate substrate. Lysine 335 and lysine 343 each carry N6-acetyllysine. The active-site Proton acceptor is lysine 343. Residues 370 to 373 (SHRS) and lysine 394 each bind substrate. The tract at residues 405–434 (AKYNQILRIEEELGSKAKFAGRSFRNPLAK) is required for interaction with PLG. Lysine 406 is modified (N6-acetyllysine). Lysine 420 is modified (N6-acetyllysine; alternate). Position 420 is an N6-succinyllysine; alternate (lysine 420). At lysine 420 the chain carries N6-malonyllysine; alternate.

The protein belongs to the enolase family. As to quaternary structure, mammalian enolase is composed of 3 isozyme subunits, alpha, beta and gamma, which can form homodimers or heterodimers which are cell-type and development-specific. ENO1 interacts with PLG in the neuronal plasma membrane and promotes its activation. The C-terminal lysine is required for this binding. Interacts with ENO4 and PGAM2. Interacts with CMTM6. Requires Mg(2+) as cofactor. ISGylated. In terms of processing, lysine 2-hydroxyisobutyrylation (Khib) by p300/EP300 activates the phosphopyruvate hydratase activity. In terms of tissue distribution, the alpha/alpha homodimer is expressed in embryo and in most adult tissues. The alpha/beta heterodimer and the beta/beta homodimer are found in striated muscle, and the alpha/gamma heterodimer and the gamma/gamma homodimer in neurons.

It is found in the cytoplasm. The protein localises to the cell membrane. The catalysed reaction is (2R)-2-phosphoglycerate = phosphoenolpyruvate + H2O. It functions in the pathway carbohydrate degradation; glycolysis; pyruvate from D-glyceraldehyde 3-phosphate: step 4/5. Functionally, glycolytic enzyme the catalyzes the conversion of 2-phosphoglycerate to phosphoenolpyruvate. In addition to glycolysis, involved in various processes such as growth control, hypoxia tolerance and allergic responses. May also function in the intravascular and pericellular fibrinolytic system due to its ability to serve as a receptor and activator of plasminogen on the cell surface of several cell-types such as leukocytes and neurons. Stimulates immunoglobulin production. This is Alpha-enolase (ENO1) from Bos taurus (Bovine).